The primary structure comprises 215 residues: Superoxide dismutase [Mn] (215 aa).

4 residues coordinate Mn(2+): His-27, His-83, Asp-170, and His-174.

This sequence belongs to the iron/manganese superoxide dismutase family. As to quaternary structure, homodimer. Mn(2+) serves as cofactor.

The catalysed reaction is 2 superoxide + 2 H(+) = H2O2 + O2. Destroys superoxide anion radicals which are normally produced within the cells and which are toxic to biological systems. This chain is Superoxide dismutase [Mn] (sodA), found in Haemophilus influenzae (strain ATCC 51907 / DSM 11121 / KW20 / Rd).